The following is a 250-amino-acid chain: Cobalt transport protein CbiM (250 aa).

The first 24 residues, 1-24, serve as a signal peptide directing secretion; the sequence is MKYWGTALLGAFCVFFFTPNTAYA. 6 helical membrane passes run 32–52, 67–87, 99–119, 122–142, 161–181, and 203–223; these read LPAG…FWGI, MLLG…IPSV, LGAI…VLLF, LLLA…MGVM, VAVF…TSLQ, and IFAI…VFVF.

This sequence belongs to the CbiM family. In terms of assembly, forms an energy-coupling factor (ECF) transporter complex composed of an ATP-binding protein (A component, CbiO), a transmembrane protein (T component, CbiQ) and 2 possible substrate-capture proteins (S components, CbiM and CbiN) of unknown stoichimetry.

It is found in the cell membrane. Its pathway is cofactor biosynthesis; adenosylcobalamin biosynthesis. Part of the energy-coupling factor (ECF) transporter complex CbiMNOQ involved in cobalt import. This is Cobalt transport protein CbiM from Desulforamulus reducens (strain ATCC BAA-1160 / DSM 100696 / MI-1) (Desulfotomaculum reducens).